The sequence spans 366 residues: UDP-N-acetylglucosamine--N-acetylmuramyl-(pentapeptide) pyrophosphoryl-undecaprenol N-acetylglucosamine transferase (366 aa).

UDP-N-acetyl-alpha-D-glucosamine-binding positions include 10-12 (TGG), Asn124, Ser195, and Gln295.

Belongs to the glycosyltransferase 28 family. MurG subfamily.

Its subcellular location is the cell membrane. The catalysed reaction is di-trans,octa-cis-undecaprenyl diphospho-N-acetyl-alpha-D-muramoyl-L-alanyl-D-glutamyl-meso-2,6-diaminopimeloyl-D-alanyl-D-alanine + UDP-N-acetyl-alpha-D-glucosamine = di-trans,octa-cis-undecaprenyl diphospho-[N-acetyl-alpha-D-glucosaminyl-(1-&gt;4)]-N-acetyl-alpha-D-muramoyl-L-alanyl-D-glutamyl-meso-2,6-diaminopimeloyl-D-alanyl-D-alanine + UDP + H(+). It participates in cell wall biogenesis; peptidoglycan biosynthesis. Functionally, cell wall formation. Catalyzes the transfer of a GlcNAc subunit on undecaprenyl-pyrophosphoryl-MurNAc-pentapeptide (lipid intermediate I) to form undecaprenyl-pyrophosphoryl-MurNAc-(pentapeptide)GlcNAc (lipid intermediate II). This Bacillus licheniformis (strain ATCC 14580 / DSM 13 / JCM 2505 / CCUG 7422 / NBRC 12200 / NCIMB 9375 / NCTC 10341 / NRRL NRS-1264 / Gibson 46) protein is UDP-N-acetylglucosamine--N-acetylmuramyl-(pentapeptide) pyrophosphoryl-undecaprenol N-acetylglucosamine transferase.